The chain runs to 491 residues: Serine/threonine-protein kinase 33 (491 aa).

The interval 51-89 is disordered; sequence FASQERKKERNTSRESSLKDLSIRTSNVERKPQAQWSRS. Basic and acidic residues predominate over residues 54–82; sequence QERKKERNTSRESSLKDLSIRTSNVERKP. The Protein kinase domain maps to 111–377; it reads YTFGRILGQG…AKELLDNQWL (267 aa). Residues 117–125 and Lys140 each bind ATP; that span reads LGQGSFGMV. Asp233 serves as the catalytic Proton acceptor. The disordered stretch occupies residues 398-491; the sequence is KNNPESDEET…TTLFRGKKRL (94 aa). Residues 402-414 are compositionally biased toward acidic residues; the sequence is ESDEETNTDEETE. Ser403 is modified (phosphoserine). The segment covering 415-431 has biased composition (polar residues); that stretch reads QSAVYSPSANTAKQPTN. The segment covering 445–457 has biased composition (low complexity); that stretch reads SSNSSSSKLLSAE. Over residues 475-484 the composition is skewed to polar residues; that stretch reads AKTTLKSTTL.

This sequence belongs to the protein kinase superfamily. CAMK Ser/Thr protein kinase family. CaMK subfamily. Homodimer. In terms of processing, autophosphorylated. Highly expressed in testis, particularly in cells from the spermatogenic epithelia. Present in meiotic and post meiotic sperm cells. Significant expression is detected in lung epithelia, alveolar macrophages, horizontal cells in the retina and in embryonic organs such as heart, brain and spinal cord. Also expressed in pituitary gland, kidney, pancreas, trachea and thyroid gland.

The protein resides in the cytoplasm. The protein localises to the cytoskeleton. Its subcellular location is the perinuclear region. The catalysed reaction is L-seryl-[protein] + ATP = O-phospho-L-seryl-[protein] + ADP + H(+). The enzyme catalyses L-threonyl-[protein] + ATP = O-phospho-L-threonyl-[protein] + ADP + H(+). Its activity is regulated as follows. Specifically inhibited by CDD-2807 ((3-([1,1'-Biphenyl]-2-ylethynyl)-1H-indazol-5-yl)(2,6-diazaspiro[3.5]nonan-2-yl)methanone). CDD-2807 is a potential male contraceptive drug: it is not toxic, efficiently crosses the blood-testis barrier and induces a reversible contraceptive effect in male mice. Its function is as follows. Serine/threonine protein kinase required for spermatid differentiation and male fertility. Promotes sperm flagella assembly during spermatogenesis by mediating phosphorylation of fibrous sheath proteins AKAP3 and AKAP4. Also phosphorylates vimentin/VIM, thereby regulating the dynamic behavior of the intermediate filament cytoskeleton. The polypeptide is Serine/threonine-protein kinase 33 (Mus musculus (Mouse)).